Consider the following 108-residue polypeptide: MPRWGRGRRRKMRMIEFIPYARHFYPALPRFGPPKPPIIMTYEEFEALRLVDYEGLTQEEAGKRMGVSRGTIWRALTSARKKVAQMLVEGRELIILPQGNEVIKSDEE.

It belongs to the UPF0251 family.

This chain is UPF0251 protein PF0620, found in Pyrococcus furiosus (strain ATCC 43587 / DSM 3638 / JCM 8422 / Vc1).